The primary structure comprises 442 residues: MDQEIYLIGLNHRTASVEVRERFALTDCTVLEQGVVPTGDDISEVVILSTCNRVEIMAVGNGPGVPARVLDCWAAARGQKRSDLEPFVYVHKGIDAVRHLFSVASSLDSMVVGEPQILGQLKDAYRKAVGRNATRVVLNRLLHKAFSVAKRVRTETGVASSAVSISYAAVELAKRIFGEMSQYKAMLIGAGEMAELAATHLLNSGIREIMVANRTFERGLQLARQFKGEAVLFQDLSVRLAEADIIISSTGAHEPIIRARDIKDVLKRRKNRPMFFIDIAVPRDIDPDVNNLDNVYLYDIDDLKEVVEENMAQRRDEAAKARSIVEEEAGNFAKWLKSLDLQPTIVDLLRRSERIAQDELARTLKRLGPVDDATREALQAMLCAIVKKVNHEPITFLKRRFDEEEAGTRYIDITRRMFNLDCDDVPDDAHSDRKHTQQRDDA.

Substrate contacts are provided by residues 50-53 (TCNR), Ser-109, 114-116 (EPQ), and Gln-120. The active-site Nucleophile is Cys-51. 189-194 (GAGEMA) lines the NADP(+) pocket.

It belongs to the glutamyl-tRNA reductase family. As to quaternary structure, homodimer.

It carries out the reaction (S)-4-amino-5-oxopentanoate + tRNA(Glu) + NADP(+) = L-glutamyl-tRNA(Glu) + NADPH + H(+). Its pathway is porphyrin-containing compound metabolism; protoporphyrin-IX biosynthesis; 5-aminolevulinate from L-glutamyl-tRNA(Glu): step 1/2. Its function is as follows. Catalyzes the NADPH-dependent reduction of glutamyl-tRNA(Glu) to glutamate 1-semialdehyde (GSA). The protein is Glutamyl-tRNA reductase of Nitratidesulfovibrio vulgaris (strain DSM 19637 / Miyazaki F) (Desulfovibrio vulgaris).